Here is a 334-residue protein sequence, read N- to C-terminus: G-protein coupled receptor 12 (334 aa).

At 1–48 (MNEDLKVNLSGLPRDYLDAAAAENISAAVSSRVPAVEPEPELVVNPWD) the chain is on the extracellular side. Asn8 and Asn24 each carry an N-linked (GlcNAc...) asparagine glycan. The helical transmembrane segment at 49–69 (IVLCTSGTLISCENAIVVLII) threads the bilayer. Over 70–77 (FHNPSLRA) the chain is Cytoplasmic. Residues 78-98 (PMFLLIGSLALADLLAGIGLI) form a helical membrane-spanning segment. At 99-113 (TNFVFAYLLQSEATK) the chain is on the extracellular side. The chain crosses the membrane as a helical span at residues 114–134 (LVTIGLIVASFSASVCSLLAI). Topologically, residues 135–158 (TVDRYLSLYYALTYHSERTVTFTY) are cytoplasmic. The chain crosses the membrane as a helical span at residues 159 to 179 (VMLVMLWGTSICLGLLPVMGW). At 180 to 199 (NCLRDESTCSVVRPLTKNNA) the chain is on the extracellular side. A helical membrane pass occupies residues 200–220 (AILSVSFLFMFALMLQLYIQI). Topologically, residues 221–252 (CKIVMRHAHQIALQHHFLATSHYVTTRKGVST) are cytoplasmic. A helical membrane pass occupies residues 253–273 (LAIILGTFAACWMPFTLYSLI). The Extracellular segment spans residues 274–282 (ADYTYPSIY). A helical transmembrane segment spans residues 283 to 303 (TYATLLPATYNSIINPVIYAF). At 304-334 (RNQEIQKALCLICCGCIPSSLAQRARSPSDV) the chain is on the cytoplasmic side. Cys317 carries S-palmitoyl cysteine lipidation. Phosphoserine is present on residues Ser330 and Ser332.

The protein belongs to the G-protein coupled receptor 1 family.

The protein resides in the cell membrane. In terms of biological role, promotes neurite outgrowth and blocks myelin inhibition in neurons. Receptor with constitutive G(s) signaling activity that stimulates cyclic AMP production. This Homo sapiens (Human) protein is G-protein coupled receptor 12 (GPR12).